The chain runs to 160 residues: Cytochrome b6-f complex subunit 4 (160 aa).

3 helical membrane-spanning segments follow: residues 36–56, 95–115, and 131–151; these read LLYI…GLAV, LLGV…PFLE, and TVFL…TLPI.

Belongs to the cytochrome b family. PetD subfamily. In terms of assembly, the 4 large subunits of the cytochrome b6-f complex are cytochrome b6, subunit IV (17 kDa polypeptide, petD), cytochrome f and the Rieske protein, while the 4 small subunits are petG, petL, petM and petN. The complex functions as a dimer.

It localises to the plastid. It is found in the chloroplast thylakoid membrane. Functionally, component of the cytochrome b6-f complex, which mediates electron transfer between photosystem II (PSII) and photosystem I (PSI), cyclic electron flow around PSI, and state transitions. This chain is Cytochrome b6-f complex subunit 4, found in Gossypium barbadense (Sea Island cotton).